Here is a 410-residue protein sequence, read N- to C-terminus: MKEELLKRFTKYVKVDTQSNEESKACPTTPGQMELANILVTELKEIGMQEVTVDEFGYVMATLPSNTTKEVPVIGFLAHLDTATDLTGKNVQPQVHENYDGKDIVLNKDLNVVLSPKQFPELADYNGKTLITTDGTTLLGADDKAGITEIMVAMNHLINHPEIKHGKIRVAFTPDEEIGRGPERFDVEAFGAKYAYTMDGGPLGELEYESFNAAGAKITFNGNSVHPGTAKNKMVNAVKMAMEFNAHIPKDEAPEYTEGYEGFYHLISLNGDVEQAKAYYIIRDFDHLKFVERKTHIASIAKELEEKYGEGSVELKLNDQYYNMREKIEPVKEIVDIVSAAMRNLDIEPKISPIRGGTDGAQLSYKGLPTPNIFGGGENFHGKFEYVALESMVKATEVIIEVARLFEEKE.

His-79 serves as a coordination point for Zn(2+). The active site involves Asp-81. Asp-142 lines the Zn(2+) pocket. Glu-176 acts as the Proton acceptor in catalysis. Zn(2+) contacts are provided by Glu-177, Asp-199, and His-381.

This sequence belongs to the peptidase M20B family. Requires Zn(2+) as cofactor.

It is found in the cytoplasm. The enzyme catalyses Release of the N-terminal residue from a tripeptide.. Functionally, cleaves the N-terminal amino acid of tripeptides. The chain is Peptidase T from Listeria monocytogenes serotype 4b (strain CLIP80459).